Consider the following 171-residue polypeptide: Tetratricopeptide repeat protein 9C (171 aa).

TPR repeat units follow at residues Ala-8–Leu-41, Thr-72–Asn-107, and Ala-108–Asp-141.

This sequence belongs to the TTC9 family.

This Homo sapiens (Human) protein is Tetratricopeptide repeat protein 9C (TTC9C).